We begin with the raw amino-acid sequence, 326 residues long: Nuclear egress protein 1 (326 aa).

The CCCH-type zinc-finger motif lies at 115-244 (CLSLSGMGYY…YAVFPTKSVH (130 aa)).

This sequence belongs to the herpesviridae NEC1 protein family. Forms a heterohexameric complex with NEC2. Interacts with capsid vertex specific component 2/CVC2; this interaction directs the capsid to the host inner nuclear membrane to initiate budding. In terms of processing, phosphorylated at serine residues in the N-terminus. This phosphorylation regulates the localization within the inner nuclear membrane.

It localises to the host nucleus inner membrane. Functionally, plays an essential role in virion nuclear egress, the first step of virion release from infected cell. Within the host nucleus, NEC1 interacts with the newly formed capsid through the vertexes and directs it to the inner nuclear membrane by associating with NEC2. Induces the budding of the capsid at the inner nuclear membrane as well as its envelopment into the perinuclear space. There, the NEC1/NEC2 complex promotes the fusion of the enveloped capsid with the outer nuclear membrane and the subsequent release of the viral capsid into the cytoplasm where it will reach the secondary budding sites in the host Golgi or trans-Golgi network. This chain is Nuclear egress protein 1, found in Equine herpesvirus 1 (strain Ab4p) (EHV-1).